The sequence spans 204 residues: NAD(P)H-quinone oxidoreductase subunit M, chloroplastic (204 aa).

Residues 1–27 (MASTSMSLTRACKVHAVLACSIPSVSS) constitute a chloroplast transit peptide.

The protein belongs to the NDH complex subunit M family. In terms of assembly, part of the chloroplast NDH complex, composed of a mixture of chloroplast and nucleus encoded subunits. Component of the NDH subcomplex A, at least composed of ndhH, ndhI, ndhJ, ndhK, ndhL, ndhM, ndhN and ndhO.

Its subcellular location is the plastid. The protein localises to the chloroplast thylakoid membrane. The catalysed reaction is a plastoquinone + NADH + (n+1) H(+)(in) = a plastoquinol + NAD(+) + n H(+)(out). It catalyses the reaction a plastoquinone + NADPH + (n+1) H(+)(in) = a plastoquinol + NADP(+) + n H(+)(out). Its function is as follows. NDH shuttles electrons from NAD(P)H:plastoquinone, via FMN and iron-sulfur (Fe-S) centers, to quinones in the photosynthetic chain and possibly in a chloroplast respiratory chain. The immediate electron acceptor for the enzyme in this species is believed to be plastoquinone. Couples the redox reaction to proton translocation, and thus conserves the redox energy in a proton gradient. This Physcomitrium patens (Spreading-leaved earth moss) protein is NAD(P)H-quinone oxidoreductase subunit M, chloroplastic.